A 308-amino-acid polypeptide reads, in one-letter code: tRNA pseudouridine synthase B (308 aa).

The active-site Nucleophile is the aspartate 47.

It belongs to the pseudouridine synthase TruB family. Type 1 subfamily.

The enzyme catalyses uridine(55) in tRNA = pseudouridine(55) in tRNA. In terms of biological role, responsible for synthesis of pseudouridine from uracil-55 in the psi GC loop of transfer RNAs. The sequence is that of tRNA pseudouridine synthase B from Xanthomonas campestris pv. campestris (strain B100).